Reading from the N-terminus, the 88-residue chain is Cytochrome c oxidase assembly factor 3, mitochondrial (88 aa).

At 1–32 (MGKLVGAPKGHDRYRDPKTHQITPALYRVRAP) the chain is on the mitochondrial matrix side. Residues 33-55 (FFWRNTIALFAVSSIPLAVYLYT) form a helical membrane-spanning segment. At 56–88 (FKKMGDDDLGDIPIPPISDEELQKLKLEYENQK) the chain is on the mitochondrial intermembrane side.

The protein belongs to the COA3 family. As to quaternary structure, component of 250-400 kDa complexes called cytochrome oxidase assembly intermediates or COA complexes.

The protein localises to the mitochondrion inner membrane. Functionally, required for assembly of cytochrome c oxidase (complex IV). The protein is Cytochrome c oxidase assembly factor 3, mitochondrial (COA3) of Candida albicans (strain WO-1) (Yeast).